The sequence spans 800 residues: Nuclear cap-binding protein subunit 1 (800 aa).

The interval 1 to 26 is disordered; the sequence is MSRRRAHDTEDEGYDHRRNKRRRVSE. At threonine 9 the chain carries Phosphothreonine. Residues 31–243 enclose the MIF4G domain; the sequence is EDRLESLILR…CLWAQIRKLR (213 aa). The segment at 669–704 is disordered; that stretch reads LSKADSSSSESDEDAPTKRKKPITHADKPSEEAVER. A compositionally biased stretch (basic and acidic residues) spans 692–704; that stretch reads THADKPSEEAVER.

Belongs to the NCBP1 family. In terms of assembly, component of the nuclear cap-binding complex (CBC), a heterodimer composed of Cbp80 and Cbp20 that interacts with m7GpppG-capped RNA.

The protein localises to the nucleus. Component of the cap-binding complex (CBC), which binds cotranscriptionally to the 5'-cap of pre-mRNAs and is involved in various processes such as pre-mRNA splicing and RNA-mediated gene silencing (RNAi). The CBC complex is involved in miRNA-mediated RNA interference via its interaction with Ars2 and is required for primary microRNAs (miRNAs) processing. Also involved in innate immunity via the short interfering RNAs (siRNAs) processing machinery by restricting the viral RNA production. In the CBC complex, Cbp80 does not bind directly capped RNAs (m7GpppG-capped RNA) but is required to stabilize the movement of the N-terminal loop of Cbp20 and lock the CBC into a high affinity cap-binding state with the cap structure. This is Nuclear cap-binding protein subunit 1 (Cbp80) from Drosophila persimilis (Fruit fly).